The sequence spans 208 residues: MKTLLRIDSSARIEGSRSRRLGDALEARWRAGSPDGAVVRRDLAADPVPHIEATTIAGFFTPADQVTDAMRAATVLSDRLIGEVEAADALLITAPMYNFGLPSTLKAWIDHVVRIHRTVAYDGTTFRGLVTGKAAYVALAYGAGSYEPGGTLAPFDYAKPYLTHVLGFIGFRDIEVVGVEGTSGEEGAAAAALDAALKAIENLPSLAA.

FMN contacts are provided by residues S10, 16 to 18, and 96 to 99; these read SRS and MYNF.

Belongs to the azoreductase type 1 family. In terms of assembly, homodimer. The cofactor is FMN.

It carries out the reaction 2 a quinone + NADH + H(+) = 2 a 1,4-benzosemiquinone + NAD(+). The catalysed reaction is N,N-dimethyl-1,4-phenylenediamine + anthranilate + 2 NAD(+) = 2-(4-dimethylaminophenyl)diazenylbenzoate + 2 NADH + 2 H(+). Its function is as follows. Quinone reductase that provides resistance to thiol-specific stress caused by electrophilic quinones. Functionally, also exhibits azoreductase activity. Catalyzes the reductive cleavage of the azo bond in aromatic azo compounds to the corresponding amines. The protein is FMN-dependent NADH:quinone oxidoreductase of Xanthobacter autotrophicus (strain ATCC BAA-1158 / Py2).